The chain runs to 179 residues: MELHATTIFAVQHDGKAAMAGDGQVTLGESVVMKHTAKKVRRLFHDKVIAGFAGSVADAFTLFEKFEAKLNEYNGNLERAAVELAQQWRSDSVLRKLEAMLIVMDKDTLLLVSGTGEVIEPDDGILAIGSGGNYALAAGRALKRHNGGQMEAKDIARHALEIASEICVFTNDHITVEEL.

Threonine 6 is an active-site residue. The Na(+) site is built by serine 164, cysteine 167, and threonine 170.

It belongs to the peptidase T1B family. HslV subfamily. A double ring-shaped homohexamer of HslV is capped on each side by a ring-shaped HslU homohexamer. The assembly of the HslU/HslV complex is dependent on binding of ATP.

Its subcellular location is the cytoplasm. The catalysed reaction is ATP-dependent cleavage of peptide bonds with broad specificity.. With respect to regulation, allosterically activated by HslU binding. Its function is as follows. Protease subunit of a proteasome-like degradation complex believed to be a general protein degrading machinery. This chain is ATP-dependent protease subunit HslV, found in Listeria innocua serovar 6a (strain ATCC BAA-680 / CLIP 11262).